A 474-amino-acid chain; its full sequence is Glutathione synthetase (474 aa).

Residue Ala2 is modified to N-acetylalanine. Arg125 serves as a coordination point for substrate. Glu144 is a binding site for ATP. Mg(2+) is bound by residues Glu144 and Asn146. Residues 148-151 (ISAS), 214-216 (ERN), Gln220, and 267-270 (RDGY) contribute to the substrate site. ATP is bound by residues Lys305, 364–373 (KPQREGGGNN), Tyr375, and 398–401 (MEKI). A Mg(2+)-binding site is contributed by Glu368. The residue at position 415 (Ser415) is a Phosphoserine. Glu425 serves as a coordination point for ATP. Arg450 is a substrate binding site. Positions 452 and 458 each coordinate ATP. 461 to 462 (VA) lines the substrate pocket.

It belongs to the eukaryotic GSH synthase family. In terms of assembly, homodimer. The cofactor is Mg(2+).

The enzyme catalyses gamma-L-glutamyl-L-cysteine + glycine + ATP = glutathione + ADP + phosphate + H(+). The catalysed reaction is gamma-L-glutamyl-(2S)-2-aminobutanoate + glycine + ATP = ophthalmate + ADP + phosphate + H(+). The protein operates within sulfur metabolism; glutathione biosynthesis; glutathione from L-cysteine and L-glutamate: step 2/2. In terms of biological role, catalyzes the production of glutathione from gamma-glutamylcysteine and glycine in an ATP-dependent manner. Glutathione (gamma-glutamylcysteinylglycine, GSH) is the most abundant intracellular thiol in living aerobic cells and is required for numerous processes including the protection of cells against oxidative damage, amino acid transport, the detoxification of foreign compounds, the maintenance of protein sulfhydryl groups in a reduced state and acts as a cofactor for a number of enzymes. Participates in ophthalmate biosynthesis in hepatocytes. The sequence is that of Glutathione synthetase from Mus musculus (Mouse).